The following is an 819-amino-acid chain: Hypoxia-inducible factor 1-alpha (819 aa).

The segment at 1-31 (MEGAAGGEEKKNRMSSERRKEKSRDAARSRR) is disordered. The interval 1–402 (MEGAAGGEEK…KEPDALTLLA (402 aa)) is interaction with TSGA10. Residues 7–31 (GEEKKNRMSSERRKEKSRDAARSRR) are compositionally biased toward basic and acidic residues. The 54-residue stretch at 18 to 71 (RRKEKSRDAARSRRSKESEVFYELAHQLPLPHNVSSHLDKASVMRLTISYLRVR) folds into the bHLH domain. A DNA-binding region spans residues 22–31 (KSRDAARSRR). The region spanning 86 to 159 (KAQMNCFYLK…THRNGPIKKG (74 aa)) is the PAS 1 domain. The tract at residues 171–192 (RMKCTLTSRGRTMNIKSATWKV) is required for heterodimer formation with ARNT. Residues 229 to 299 (PHPSNIEIPL…KTHHDMFTKG (71 aa)) enclose the PAS 2 domain. S248 carries the phosphoserine; by CK1 modification. The PAC domain maps to 303–346 (TGQYRMLAKRGGYVWVETQATVIYNTKNSQPQCIVCVNYVVSGI). The segment at 402–599 (APAAGDTIIS…NPPSVSTAFQ (198 aa)) is ODD. P403 carries the post-translational modification 4-hydroxyproline. Polar residues predominate over residues 495 to 518 (IQDQPASPSDGSTRQSSPEPNSPS). Residues 495–521 (IQDQPASPSDGSTRQSSPEPNSPSEYC) form a disordered region. Residues 532 to 576 (FKLELVEKLFAEDTEAKNPFSTQDTDLDLEMLAPYIPMDDDFQLR) are NTAD. K533 carries the post-translational modification N6-acetyllysine; alternate. K533 is covalently cross-linked (Glycyl lysine isopeptide (Lys-Gly) (interchain with G-Cter in ubiquitin); alternate). Glycyl lysine isopeptide (Lys-Gly) (interchain with G-Cter in ubiquitin) cross-links involve residues K539 and K548. S552 carries the post-translational modification Phosphoserine; by GSK3-beta. T556 bears the Phosphothreonine; by GSK3-beta mark. P565 carries the post-translational modification 4-hydroxyproline. At S577 the chain carries Phosphoserine; by PLK3. The ID stretch occupies residues 577 to 778 (SFDQLSPLES…SDLACRLLGQ (202 aa)). The segment at 581–685 (LSPLESSSPN…SHPRSPNVLS (105 aa)) is disordered. Positions 582 to 613 (SPLESSSPNPPSVSTAFQQTQLQEPTITTTTT) are enriched in low complexity. Residues 614 to 628 (EELKTVTKDSTEDIK) show a composition bias toward basic and acidic residues. Low complexity predominate over residues 632-655 (TSPSSTHTPKETTTATTSSPYSGT). Residue S650 is modified to Phosphoserine; by PLK3. Position 702 is an N6-acetyllysine (K702). Positions 711-717 (RKRKMEH) match the Nuclear localization signal motif. A CTAD region spans residues 779 to 819 (SMDGSGLPQLTSYDCEVNAPIQGSRNLLQGEELLRALDQVN). Position 793 is an S-nitrosocysteine (C793). (3S)-3-hydroxyasparagine is present on N796.

Interacts with the ARNT; forms a heterodimer that binds core DNA sequence 5'-TACGTG-3' within the hypoxia response element (HRE) of target gene promoters. Interacts with COPS5; the interaction increases the transcriptional activity of HIF1A through increased stability. Interacts with EP300 (via TAZ-type 1 domains); the interaction is stimulated in response to hypoxia and inhibited by CITED2. Interacts with CREBBP (via TAZ-type 1 domains). Interacts with NCOA1, NCOA2, APEX1 and HSP90. Interacts (hydroxylated within the ODD domain) with VHLL (via beta domain); the interaction, leads to polyubiquitination and subsequent HIF1A proteasomal degradation. During hypoxia, sumoylated HIF1A also binds VHL; the interaction promotes the ubiquitination of HIF1A. Interacts with SENP1; the interaction desumoylates HIF1A resulting in stabilization and activation of transcription. Interacts (via the ODD domain) with NAA10; the interaction appears not to acetylate HIF1A nor have any affect on protein stability, during hypoxia. Interacts with RWDD3; the interaction enhances HIF1A sumoylation. Interacts with TSGA10. Interacts with HIF3A. Interacts with RORA (via the DNA binding domain); the interaction enhances HIF1A transcription under hypoxia through increasing protein stability. Interaction with PSMA7 inhibits the transactivation activity of HIF1A under both normoxic and hypoxia-mimicking conditions. Interacts with USP20. Interacts with RACK1; promotes HIF1A ubiquitination and proteasome-mediated degradation. Interacts (via N-terminus) with USP19. Interacts with SIRT2. Interacts (deacetylated form) with EGLN1. Interacts with CBFA2T3. Interacts with HSP90AA1 and HSP90AB1. Interacts with DCUN1D1; this interaction increases the interaction between VHL and DCUN1D1. Interacts with HIF1AN. S-nitrosylation of Cys-793 may be responsible for increased recruitment of p300 coactivator necessary for transcriptional activity of HIF-1 complex. In terms of processing, acetylation of Lys-533 by ARD1 increases interaction with VHL and stimulates subsequent proteasomal degradation. Deacetylation of Lys-702 by SIRT2 increases its interaction with and hydroxylation by EGLN1 thereby inactivating HIF1A activity by inducing its proteasomal degradation. Post-translationally, requires phosphorylation for DNA-binding. Phosphorylation at Ser-248 by CSNK1D/CK1 represses kinase activity and impairs ARNT binding. Phosphorylation by GSK3-beta and PLK3 promote degradation by the proteasome. The iron and 2-oxoglutarate dependent 3-hydroxylation of asparagine is (S) stereospecific within HIF CTAD domains. In terms of processing, sumoylated; with SUMO1 under hypoxia. Sumoylation is enhanced through interaction with RWDD3. Both sumoylation and desumoylation seem to be involved in the regulation of its stability during hypoxia. Sumoylation can promote either its stabilization or its VHL-dependent degradation by promoting hydroxyproline-independent HIF1A-VHL complex binding, thus leading to HIF1A ubiquitination and proteasomal degradation. Desumoylation by SENP1 increases its stability amd transcriptional activity. There is a disaccord between various publications on the effect of sumoylation and desumoylation on its stability and transcriptional activity. Post-translationally, in normoxia, is hydroxylated on Pro-403 and Pro-565 in the oxygen-dependent degradation domain (ODD) by EGLN1/PHD2 and EGLN2/PHD1. EGLN3/PHD3 has also been shown to hydroxylate Pro-565. The hydroxylated prolines promote interaction with VHL, initiating rapid ubiquitination and subsequent proteasomal degradation. Deubiquitinated by USP20. Under hypoxia, proline hydroxylation is impaired and ubiquitination is attenuated, resulting in stabilization. In normoxia, is hydroxylated on Asn-796 by HIF1AN, thus abrogating interaction with CREBBP and EP300 and preventing transcriptional activation. Repressed by iron ion, via Fe(2+) prolyl hydroxylase (PHD) enzymes-mediated hydroxylation and subsequent proteasomal degradation.

It localises to the cytoplasm. The protein resides in the nucleus. It is found in the nucleus speckle. Its activity is regulated as follows. Induced by reactive oxygen species (ROS). Its function is as follows. Functions as a master transcriptional regulator of the adaptive response to hypoxia. Under hypoxic conditions, activates the transcription of over 40 genes, including erythropoietin, glucose transporters, glycolytic enzymes, vascular endothelial growth factor, HILPDA, and other genes whose protein products increase oxygen delivery or facilitate metabolic adaptation to hypoxia. Plays an essential role in embryonic vascularization, tumor angiogenesis and pathophysiology of ischemic disease. Heterodimerizes with ARNT; heterodimer binds to core DNA sequence 5'-TACGTG-3' within the hypoxia response element (HRE) of target gene promoters. Activation requires recruitment of transcriptional coactivators such as CREBBP and EP300. Activity is enhanced by interaction with NCOA1 and/or NCOA2. Interaction with redox regulatory protein APEX1 seems to activate CTAD and potentiates activation by NCOA1 and CREBBP. Involved in the axonal distribution and transport of mitochondria in neurons during hypoxia. The protein is Hypoxia-inducible factor 1-alpha (HIF1A) of Eospalax fontanierii baileyi (Plateau zokor).